A 467-amino-acid chain; its full sequence is MPDIHIKNTRIYYNNSLRPAEILIENGKITKIGKDFRVSSSDMVIDAEGALTLPAGIDVHVHFREPGMTLKENWYTGSCAAAAGGIATVIDQPNTIPPTTDRRSFEQKLKLARKKSIVDFGINGGVTGNIEKLRELWRLGVTAFGEIFMAESTGGLNINEETFEEALAEIKKLGALATIHAEDEKMRLELEQLLKGDVSYDYHSKVRPNACEASAVQSALELISRLQVRAHFCHLSTLEAVGMIRKEKYLAKRENKKPLFTCEVTPHHLFLSAKDWERLRAFGKMNPPLRGSHSIKALVNGLNDGTIDMVASDHAPHLESEKDLDIRAAPSGVPGVETLMPLMLAAVRKNILPLSQMIMVTSWNPAKAFGLDRLGKGWLEVGFDADLMIVDPRNLQPIRADMLHSKAGWTPFEGMDAVFPEYTLSRGEVIWMEDSINAKPGRGEFLEGSGKRSEEDEEENSEETGSD.

Residues histidine 60 and histidine 62 each contribute to the Zn(2+) site. Residues 62–64 (HFR) and asparagine 94 each bind substrate. Residues glutamate 146, histidine 180, histidine 234, and aspartate 313 each coordinate Zn(2+). Residue aspartate 313 is part of the active site. Histidine 317 lines the substrate pocket. Residues 439 to 467 (KPGRGEFLEGSGKRSEEDEEENSEETGSD) are disordered. The span at 441–454 (GRGEFLEGSGKRSE) shows a compositional bias: basic and acidic residues. A compositionally biased stretch (acidic residues) spans 455–467 (EDEEENSEETGSD).

This sequence belongs to the metallo-dependent hydrolases superfamily. DHOase family. Class I DHOase subfamily. Zn(2+) serves as cofactor.

The catalysed reaction is (S)-dihydroorotate + H2O = N-carbamoyl-L-aspartate + H(+). It functions in the pathway pyrimidine metabolism; UMP biosynthesis via de novo pathway; (S)-dihydroorotate from bicarbonate: step 3/3. Catalyzes the reversible cyclization of carbamoyl aspartate to dihydroorotate. The polypeptide is Dihydroorotase (Methanosarcina acetivorans (strain ATCC 35395 / DSM 2834 / JCM 12185 / C2A)).